A 1203-amino-acid chain; its full sequence is Potassium/sodium hyperpolarization-activated cyclic nucleotide-gated channel 4 (1203 aa).

Positions 1-182 (MDKLPPSMRK…QPASASCEQP (182 aa)) are disordered. The Cytoplasmic segment spans residues 1–263 (MDKLPPSMRK…IIHPYSDFRF (263 aa)). Over residues 26–36 (MDEEEDAEEEG) the composition is skewed to acidic residues. A compositionally biased stretch (gly residues) spans 105 to 117 (SRGGGSGGTGSGS). Over residues 121–133 (HLHDSAEERRLIA) the composition is skewed to basic and acidic residues. Serine 138 is modified (phosphoserine). Pro residues predominate over residues 163 to 174 (ASPPPPQQPPQP). The segment at 209–260 (GQAGFMQRQFGAMLQPGVNKFSLRMFGSQKAVEREQERVKSAGFWIIHPYSD) is involved in subunit assembly. The chain crosses the membrane as a helical span at residues 264 to 286 (YWDLTMLLLMVGNLIIIPVGITF). At 287–293 (FKDENTT) the chain is on the extracellular side. A helical transmembrane segment spans residues 294–314 (PWIVFNVVSDTFFLIDLVLNF). Over 315–336 (RTGIVVEDNTEIILDPQRIKMK) the chain is Cytoplasmic. A helical membrane pass occupies residues 337-359 (YLKSWFMVDFISSIPVDYIFLIV). The Extracellular segment spans residues 360–378 (ETRIDSEVYKTARALRIVR). A helical; Voltage-sensor transmembrane segment spans residues 379 to 399 (FTKILSLLRLLRLSRLIRYIH). Over 400 to 413 (QWEEIFHMTYDLAS) the chain is Cytoplasmic. Residues 414–436 (AVVRIVNLIGMMLLLCHWDGCLQ) traverse the membrane as a helical segment. Topologically, residues 437-464 (FLVPMLQDFPDDCWVSINNMVNNSWGKQ) are extracellular. Asparagine 458 is a glycosylation site (N-linked (GlcNAc...) asparagine). An intramembrane region (pore-forming) is located at residues 465-486 (YSYALFKAMSHMLCIGYGRQAP). Over 487–491 (VGMSD) the chain is Extracellular. A helical transmembrane segment spans residues 492-517 (VWLTMLSMIVGATCYAMFIGHATALI). The Cytoplasmic portion of the chain corresponds to 518–1203 (QSLDSSRRQY…PVRSKLPSNL (686 aa)). Positions 559, 562, 564, and 566 each coordinate 3',5'-cyclic GMP. 3',5'-cyclic AMP-binding residues include glycine 659, glutamate 660, cysteine 662, arginine 669, threonine 670, valine 673, and arginine 710. Disordered stretches follow at residues 836–856 (ALGS…SSSS), 870–897 (GLSP…TPSA), and 918–1203 (LSSS…PSNL). 2 stretches are compositionally biased toward low complexity: residues 918 to 941 (LSSS…AAQP) and 966 to 986 (RSPS…SLGL). The segment covering 995 to 1004 (ETPPRQPEPP) has biased composition (pro residues). Positions 1005 to 1028 (SLVAGASGGASPVGFTPRGGLSPP) are enriched in low complexity. Pro residues predominate over residues 1029-1042 (GHSPGPPRTFPSAP). Residues 1045–1056 (ASGSHGSLLLPP) are compositionally biased toward low complexity. A phosphoserine mark is found at serine 1105 and serine 1108. A compositionally biased stretch (gly residues) spans 1122-1137 (AGGGSGGSGSSGGLGP).

The protein belongs to the potassium channel HCN family. Homotetramer. The channel assemble into homotetramers or heteromeric complexes that contains of four pore-forming subunits. Interacts with PEX5L with a 4:4 HCN4:PEX5L stoichiometry; reduces the effects of cAMP on the voltage-dependence and rate of activation. Interacts with IRAG1; regulates HCN4 channel activity. Interacts with IRAG2; regulates HCN4 channel activity. In terms of processing, S-palmitoylated. As to expression, highly expressed in thalamus, testis and in heart, both in ventricle and atrium. Detected at much lower levels in amygdala, substantia nigra, cerebellum and hippocampus.

Its subcellular location is the cell membrane. It carries out the reaction K(+)(in) = K(+)(out). The catalysed reaction is Na(+)(in) = Na(+)(out). With respect to regulation, activated by cAMP and to a lesser extent by cGMP and cCMP. cAMP binding causes a conformation change that leads to the assembly of an active tetramer and channel opening. Binding of cAMP removes a tonic inhibition conferred by cyclic nucleotide-binding domain (CNBD) on channel opening. Cyclic dinucleotides can modulate HCN4 channel; cyclic dinucleotides acting as potent antagonists of cAMP. Inhibited by extracellular Cs(+) ions. Auxiliary subunits can also regulate HCN4 channel. IRAG1 causes a gain-of-function by shifting HCN4 activation to more depolarized membrane potentials in the absence of cAMP. In contrast, IRAG2 causes a loss-of-function by inhibiting cAMP-dependent potentiation of HCN4 activation. Its function is as follows. Hyperpolarization-activated ion channel that are permeable to Na(+) and K(+) ions with very slow activation and inactivation. Exhibits higher selectivity for K(+) over Na(+) ions. Contributes to the native pacemaker currents in heart (If) that regulate the rhythm of heart beat. Contributes to the native pacemaker currents in neurons (Ih). May mediate responses to sour stimuli. This Homo sapiens (Human) protein is Potassium/sodium hyperpolarization-activated cyclic nucleotide-gated channel 4.